A 143-amino-acid polypeptide reads, in one-letter code: Large ribosomal subunit protein uL15 (143 aa).

The interval 1 to 59 is disordered; it reads MELNGIKPSLGAKHAKRRVGRGIGSGLGKTAGRGHKGQKSRAGGYHKVGFEGGQMPMQR. The span at 21–31 shows a compositional bias: gly residues; that stretch reads RGIGSGLGKTA.

The protein belongs to the universal ribosomal protein uL15 family. Part of the 50S ribosomal subunit.

Its function is as follows. Binds to the 23S rRNA. The protein is Large ribosomal subunit protein uL15 of Polaromonas sp. (strain JS666 / ATCC BAA-500).